The following is a 274-amino-acid chain: Ribosomal RNA small subunit methyltransferase A (274 aa).

Positions 15, 17, 42, 64, 89, and 108 each coordinate S-adenosyl-L-methionine.

Belongs to the class I-like SAM-binding methyltransferase superfamily. rRNA adenine N(6)-methyltransferase family. RsmA subfamily.

The protein resides in the cytoplasm. It carries out the reaction adenosine(1518)/adenosine(1519) in 16S rRNA + 4 S-adenosyl-L-methionine = N(6)-dimethyladenosine(1518)/N(6)-dimethyladenosine(1519) in 16S rRNA + 4 S-adenosyl-L-homocysteine + 4 H(+). Its function is as follows. Specifically dimethylates two adjacent adenosines (A1518 and A1519) in the loop of a conserved hairpin near the 3'-end of 16S rRNA in the 30S particle. May play a critical role in biogenesis of 30S subunits. This chain is Ribosomal RNA small subunit methyltransferase A, found in Prochlorococcus marinus (strain MIT 9215).